The following is a 372-amino-acid chain: Alanine racemase (372 aa).

Lysine 37 serves as the catalytic Proton acceptor; specific for D-alanine. Lysine 37 carries the N6-(pyridoxal phosphate)lysine modification. Arginine 136 provides a ligand contact to substrate. The active-site Proton acceptor; specific for L-alanine is the tyrosine 265. Residue methionine 313 participates in substrate binding.

Belongs to the alanine racemase family. Pyridoxal 5'-phosphate is required as a cofactor.

It carries out the reaction L-alanine = D-alanine. Its pathway is amino-acid biosynthesis; D-alanine biosynthesis; D-alanine from L-alanine: step 1/1. In terms of biological role, catalyzes the interconversion of L-alanine and D-alanine. May also act on other amino acids. The polypeptide is Alanine racemase (alr) (Synechocystis sp. (strain ATCC 27184 / PCC 6803 / Kazusa)).